The following is a 247-amino-acid chain: Uridylate kinase (247 aa).

16–19 (KLSG) is an ATP binding site. A UMP-binding site is contributed by Gly-58. Residues Gly-59 and Arg-63 each coordinate ATP. Residues Asp-78 and 139-146 (TGNPFFTT) each bind UMP. ATP is bound by residues Thr-166, Tyr-172, and Asp-175.

It belongs to the UMP kinase family. Homohexamer.

The protein localises to the cytoplasm. The enzyme catalyses UMP + ATP = UDP + ADP. The protein operates within pyrimidine metabolism; CTP biosynthesis via de novo pathway; UDP from UMP (UMPK route): step 1/1. Inhibited by UTP. Its function is as follows. Catalyzes the reversible phosphorylation of UMP to UDP. The polypeptide is Uridylate kinase (Xylella fastidiosa (strain 9a5c)).